The following is a 265-amino-acid chain: RING finger protein 208 (265 aa).

Positions 83 to 106 are disordered; that stretch reads MPTLEGASHTPPLPRRPRKGSSEL. A Phosphoserine modification is found at Ser-103. An RING-type zinc finger spans residues 147–194; the sequence is CPTCGHTYNVTQRRPRVLSCLHSVCEQCLQILYESCPKYKFISCPTCH.

This is RING finger protein 208 (Rnf208) from Mus musculus (Mouse).